The primary structure comprises 209 residues: Neurotrophin-4 (209 aa).

An N-terminal signal peptide occupies residues 1–21; the sequence is MLPRHSCSLLLFLFLLPSVPM. Positions 22–79 are excised as a propeptide; that stretch reads EPHPPSSTLPPFLAPEWDLLSPRVALSRGAPAGPPLLFLLEAGAYGEPAGAPANRSRR. An N-linked (GlcNAc...) asparagine glycan is attached at Asn75. Intrachain disulfides connect Cys96–Cys169, Cys140–Cys198, and Cys157–Cys200.

This sequence belongs to the NGF-beta family.

Its subcellular location is the secreted. Functionally, target-derived survival factor for peripheral sensory sympathetic neurons. May promote ameloblast differentiation and subsequent reduction in proliferation of ameloblasts. The protein is Neurotrophin-4 (Ntf4) of Mus musculus (Mouse).